The chain runs to 247 residues: Carboxy-S-adenosyl-L-methionine synthase (247 aa).

S-adenosyl-L-methionine contacts are provided by residues Tyr-39, 64–66, 89–90, 117–118, Asn-132, and Arg-199; these read GCS, DN, and DI.

The protein belongs to the class I-like SAM-binding methyltransferase superfamily. Cx-SAM synthase family. Homodimer.

It carries out the reaction prephenate + S-adenosyl-L-methionine = carboxy-S-adenosyl-L-methionine + 3-phenylpyruvate + H2O. Its function is as follows. Catalyzes the conversion of S-adenosyl-L-methionine (SAM) to carboxy-S-adenosyl-L-methionine (Cx-SAM). This chain is Carboxy-S-adenosyl-L-methionine synthase, found in Klebsiella pneumoniae subsp. pneumoniae (strain ATCC 700721 / MGH 78578).